A 91-amino-acid chain; its full sequence is MQRNLVVLLFLGMVALSSCGLREKHFQKLVKYAVPEGTLRTIIQTAVHKLGKTQFGCPAYQGYCDDHCQDIKKEEGFCHGFKCKCGIPMGF.

A signal peptide spans 1–19 (MQRNLVVLLFLGMVALSSC). The propeptide occupies 20–27 (GLREKHFQ). The region spanning 54-91 (QFGCPAYQGYCDDHCQDIKKEEGFCHGFKCKCGIPMGF) is the BetaSPN-type CS-alpha/beta domain. Intrachain disulfides connect Cys-57–Cys-78, Cys-64–Cys-83, and Cys-68–Cys-85.

It belongs to the long chain scorpion toxin family. Class 1 subfamily. Expressed by the venom gland.

The protein resides in the secreted. In terms of biological role, inhibits voltage-gated potassium channel. The protein is Potassium channel toxin BmTXK-beta-2 of Olivierus martensii (Manchurian scorpion).